The following is a 382-amino-acid chain: Adenosine 3'-phospho 5'-phosphosulfate transporter 2 (382 aa).

Over residues 1-10 (MSVSNRNGNG) the composition is skewed to polar residues. The interval 1-33 (MSVSNRNGNGSEVIYVGDRSTNRPPRNAPSPDE) is disordered. A run of 10 helical transmembrane segments spans residues 56 to 76 (LCCAGVFVLYLLYGYMQELIF), 83 to 103 (PYGWFLTLVQFAYYTVFGYVE), 121 to 141 (VLLAFLTLGTMGLSNSSLGYL), 144 to 164 (PTQVIFKCCKLVPVLIGSILI), 170 to 190 (GPLDFLAAIAMCLGLTLFTLA), 197 to 217 (NFNPFGVLLISLALLCDAAIG), 234 to 254 (VVIYSYGIGFVYLSVIMLLTG), 271 to 291 (FGYAFLFSLSGYLGIQIVLTL), 299 to 319 (LAATVTTARKAVTIALSFVFF), and 323 to 343 (FTINYLWSGLIVVLGIYLNVY).

The protein belongs to the nucleotide-sugar transporter family. SLC35B subfamily.

It localises to the golgi apparatus membrane. Its function is as follows. Mediates the transport of adenosine 3'-phospho 5'-phosphosulfate (PAPS), from cytosol into Golgi. PAPS is a universal sulfuryl donor for sulfation events that take place in the Golgi. Essential for viability. Involved in glycosaminoglycan synthesis and the subsequent signaling. May be involved in hh and dpp signaling by controlling the sulfation of heparan sulfate (HS). This chain is Adenosine 3'-phospho 5'-phosphosulfate transporter 2, found in Aedes aegypti (Yellowfever mosquito).